We begin with the raw amino-acid sequence, 508 residues long: MGLPWYRVHTVVLNDPGRLLSVHIMHTALVSGWAGSMALYELAVFDPSDPVLDPMWRQGMFVIPFMTRLGINNSWGGWSITGGTITNPGIWSYEGVAGAHIVFSGLCFLAAIWHWVYWDLEIFCDERTGKPSLDLPKIFGIHLFLSGVACFGFGAFHVTGLYGPGIWVSDPYGLTGKVQSVNPAWGAEGFDPFVPGGIASHHIAAGTLGILAGLFHLSVRPPQRLYKGLRMGNIETVLSSSIAAVFFAAFVVAGTMWYGSATTPIELFGPTRYQWDQGYFQQEIYRRVGTGLSENQSLSEAWSKIPEKLAFYDYIGNNPAKGGLFRAGPMDNGDGIAVGWLGHPIFRDKEGHELFVRRMPTFFETFPVVLVDGDGIVRADVPFRRAESKYSVEQVGVTVEFYGGELNGVSYSDPATVKKYARRAQLGEIFELDRATLKSDGVFRSSPRGWFTFGHATFALLFFFGHIWHGARTLFRDVFAGIDPDLDAQVEFGTFQKLGDPTTRRQVV.

6 helical membrane-spanning segments follow: residues 21–36 (SVHI…WAGS), 101–115 (IVFS…IWHW), 140–156 (GIHL…FGAF), 203–218 (IAAG…FHLS), 237–252 (VLSS…AFVV), and 457–472 (TFAL…HGAR).

It belongs to the PsbB/PsbC family. PsbB subfamily. PSII is composed of 1 copy each of membrane proteins PsbA, PsbB, PsbC, PsbD, PsbE, PsbF, PsbH, PsbI, PsbJ, PsbK, PsbL, PsbM, PsbT, PsbX, PsbY, PsbZ, Psb30/Ycf12, at least 3 peripheral proteins of the oxygen-evolving complex and a large number of cofactors. It forms dimeric complexes. Requires Binds multiple chlorophylls. PSII binds additional chlorophylls, carotenoids and specific lipids. as cofactor.

The protein resides in the plastid. The protein localises to the chloroplast thylakoid membrane. Its function is as follows. One of the components of the core complex of photosystem II (PSII). It binds chlorophyll and helps catalyze the primary light-induced photochemical processes of PSII. PSII is a light-driven water:plastoquinone oxidoreductase, using light energy to abstract electrons from H(2)O, generating O(2) and a proton gradient subsequently used for ATP formation. The polypeptide is Photosystem II CP47 reaction center protein (Chloranthus spicatus (Chulantree)).